We begin with the raw amino-acid sequence, 171 residues long: Ribosome maturation factor RimM (171 aa).

A PRC barrel domain is found at 96–168; that stretch reads EDGFYDHELE…TATITPPEGL (73 aa).

It belongs to the RimM family. Binds ribosomal protein uS19.

Its subcellular location is the cytoplasm. Functionally, an accessory protein needed during the final step in the assembly of 30S ribosomal subunit, possibly for assembly of the head region. Essential for efficient processing of 16S rRNA. May be needed both before and after RbfA during the maturation of 16S rRNA. It has affinity for free ribosomal 30S subunits but not for 70S ribosomes. The sequence is that of Ribosome maturation factor RimM from Corynebacterium glutamicum (strain ATCC 13032 / DSM 20300 / JCM 1318 / BCRC 11384 / CCUG 27702 / LMG 3730 / NBRC 12168 / NCIMB 10025 / NRRL B-2784 / 534).